A 106-amino-acid polypeptide reads, in one-letter code: Tubulin-specific chaperone A (106 aa).

Ser-94 bears the Phosphoserine mark.

Belongs to the TBCA family.

The protein localises to the cytoplasm. It localises to the cytoskeleton. Tubulin-folding protein; involved in the early step of the tubulin folding pathway. In Saccharomyces cerevisiae (strain ATCC 204508 / S288c) (Baker's yeast), this protein is Tubulin-specific chaperone A (RBL2).